Consider the following 274-residue polypeptide: Ribose-5-phosphate isomerase (274 aa).

The protein belongs to the ribose 5-phosphate isomerase family.

The protein localises to the cytoplasm. The enzyme catalyses aldehydo-D-ribose 5-phosphate = D-ribulose 5-phosphate. It participates in carbohydrate degradation; pentose phosphate pathway; D-ribose 5-phosphate from D-ribulose 5-phosphate (non-oxidative stage): step 1/1. The polypeptide is Ribose-5-phosphate isomerase (RKI1) (Kluyveromyces lactis (strain ATCC 8585 / CBS 2359 / DSM 70799 / NBRC 1267 / NRRL Y-1140 / WM37) (Yeast)).